Reading from the N-terminus, the 85-residue chain is Small ribosomal subunit protein uS17 (85 aa).

It belongs to the universal ribosomal protein uS17 family. Part of the 30S ribosomal subunit.

Functionally, one of the primary rRNA binding proteins, it binds specifically to the 5'-end of 16S ribosomal RNA. The sequence is that of Small ribosomal subunit protein uS17 from Anaeromyxobacter sp. (strain Fw109-5).